Consider the following 859-residue polypeptide: Bifunctional levopimaradiene synthase, chloroplastic (859 aa).

Residues 1–52 (MALLSSSLSSHIPTGAHHLTLNAYANTQCIPHFFSTLNAGTSAGKRSSLYLR) constitute a chloroplast transit peptide. Asp-392, Asp-394, Asp-611, Asp-615, Asn-755, and Glu-763 together coordinate Mg(2+). The DXDD motif signature appears at 392–395 (DIDD). Positions 611–615 (DDLYD) match the DDXXD motif motif.

It belongs to the terpene synthase family. Tpsd subfamily. Mg(2+) is required as a cofactor. The cofactor is Mn(2+).

The protein localises to the plastid. The protein resides in the chloroplast. It catalyses the reaction (+)-copalyl diphosphate = abieta-8(14),12-diene + diphosphate. The enzyme catalyses (+)-copalyl diphosphate = abieta-7,13-diene + diphosphate. It functions in the pathway secondary metabolite biosynthesis; terpenoid biosynthesis. It participates in terpene metabolism; oleoresin biosynthesis. Functionally, terpene synthase (di-TPS) involved in the biosynthesis of diterpene natural products included in conifer oleoresin secretions and volatile emissions; these compounds contribute to biotic and abiotic stress defense against herbivores and pathogens. Catalyzes the conversion of (+)-copalyl diphosphate ((+)-CPP) to isopimaradiene. The polypeptide is Bifunctional levopimaradiene synthase, chloroplastic (Picea sitchensis (Sitka spruce)).